Here is a 448-residue protein sequence, read N- to C-terminus: Maltoporin (448 aa).

An N-terminal signal peptide occupies residues Met-1 to Ala-25.

This sequence belongs to the porin LamB (TC 1.B.3) family. As to quaternary structure, homotrimer formed of three 18-stranded antiparallel beta-barrels, containing three independent channels.

Its subcellular location is the cell outer membrane. The enzyme catalyses beta-maltose(in) = beta-maltose(out). In terms of biological role, involved in the transport of maltose and maltodextrins. The protein is Maltoporin of Cronobacter sakazakii (strain ATCC BAA-894) (Enterobacter sakazakii).